A 239-amino-acid polypeptide reads, in one-letter code: Ribonuclease 3 (239 aa).

In terms of domain architecture, RNase III spans 12 to 137 (REKVEAVIGY…LIAAIYLDAG (126 aa)). Glutamate 50 contributes to the Mg(2+) binding site. Aspartate 54 is an active-site residue. Positions 123 and 126 each coordinate Mg(2+). Glutamate 126 is a catalytic residue. Positions 162 to 231 (DAKTELQEWA…ATRLLEREGV (70 aa)) constitute a DRBM domain.

This sequence belongs to the ribonuclease III family. Homodimer. Mg(2+) is required as a cofactor.

The protein resides in the cytoplasm. The catalysed reaction is Endonucleolytic cleavage to 5'-phosphomonoester.. In terms of biological role, digests double-stranded RNA. Involved in the processing of primary rRNA transcript to yield the immediate precursors to the large and small rRNAs (23S and 16S). Processes some mRNAs, and tRNAs when they are encoded in the rRNA operon. Processes pre-crRNA and tracrRNA of type II CRISPR loci if present in the organism. The sequence is that of Ribonuclease 3 from Allorhizobium ampelinum (strain ATCC BAA-846 / DSM 112012 / S4) (Agrobacterium vitis (strain S4)).